The sequence spans 693 residues: Polyphosphate kinase (693 aa).

N57 provides a ligand contact to ATP. Residues R383 and R413 each contribute to the Mg(2+) site. The Phosphohistidine intermediate role is filled by H443. Y476, R572, and H601 together coordinate ATP.

This sequence belongs to the polyphosphate kinase 1 (PPK1) family. Requires Mg(2+) as cofactor. Post-translationally, an intermediate of this reaction is the autophosphorylated ppk in which a phosphate is covalently linked to a histidine residue through a N-P bond.

It catalyses the reaction [phosphate](n) + ATP = [phosphate](n+1) + ADP. Catalyzes the reversible transfer of the terminal phosphate of ATP to form a long-chain polyphosphate (polyP). This Acinetobacter baumannii (strain ATCC 17978 / DSM 105126 / CIP 53.77 / LMG 1025 / NCDC KC755 / 5377) protein is Polyphosphate kinase.